Reading from the N-terminus, the 538-residue chain is Retinoblastoma-binding protein 5 (538 aa).

WD repeat units follow at residues 22–63 and 64–103; these read DCIS…KIIS and AHIH…CDQR. A Glycyl lysine isopeptide (Lys-Gly) (interchain with G-Cter in SUMO2) cross-link involves residue lysine 129. WD repeat units follow at residues 148–188, 196–235, 249–291, and 293–331; these read DDDS…LVAS, SNTT…TCGR, VNRT…KILH, and TRGE…NWSA. Threonine 252 is subject to Phosphothreonine; by CDK1. The segment at 330-366 is interaction with ASH2L; sequence SAFAPDFKELDENVEYEERESEFDIEDEDKSEPEQTG. Positions 344–360 are enriched in acidic residues; it reads EYEERESEFDIEDEDKS. The segment at 344–377 is disordered; it reads EYEERESEFDIEDEDKSEPEQTGADAAEDEEVDV. Serine 350 carries the post-translational modification Phosphoserine. Residues 371–380 form an interaction with WDR5 region; sequence EDEEVDVTSV. Phosphoserine is present on residues serine 388 and serine 389. The segment at 408 to 538 is disordered; sequence VEDPEENPYG…TAGGAISELL (131 aa). Residues 479 to 490 show a composition bias toward basic residues; the sequence is SKKKQAGRPKGS. Residues 491–510 show a composition bias toward basic and acidic residues; that stretch reads KGKEKDSPFKPKLYKGDRGL. Serine 497 is subject to Phosphoserine; by CDK1. Serine 525 carries the post-translational modification Phosphoserine.

Component of the SET1 complex, at least composed of the catalytic subunit (SETD1A or SETD1B), WDR5, WDR82, RBBP5, ASH2L/ASH2, CXXC1/CFP1, HCFC1 and DPY30. Core component of several methyltransferase-containing complexes including MLL1/MLL, MLL2/3 (also named ASCOM complex) and MLL4/WBP7. Each complex is at least composed of ASH2L, RBBP5, WDR5, DPY30, one or more specific histone methyltransferases (KMT2A/MLL1, KMT2D/MLL2, KMT2C/MLL3 and KMT2B/MLL4), and the facultative components PAGR1, BACC1, CHD8, E2F6, HCFC1, HCFC2, HSP70, INO80C, KDM6A, KANSL1, LAS1L, MAX, MCRS1, MEN1, MGA, MYST1/MOF, NCOA6, PAXIP1/PTIP, PELP1, PHF20, PRP31, RING2, RUVB1/TIP49A, RUVB2/TIP49B, SENP3, TAF1, TAF4, TAF6, TAF7, TAF9, TEX10 and alpha- and beta-tubulin. Component of a histone methylation complex composed of at least ZNF335, RBBP5, ASH2L and WDR5; the complex may have histone H3-specific methyltransferase activity, however does not have specificity for 'Lys-4' of histone H3. Interacts with ZNF335. Interacts with ASH2L; the interaction is direct. Interacts with WDR5; the interaction is direct. Components of the ZNF335-RBBP5-ASH2L-WDR5 histone methylation complex may associate with components of a nuclear receptor-mediated transcription complex to form a complex at least composed of ZNF335, HCFC1, CCAR2, EMSY, MKI67, RBBP5, ASH2L and WDR5. Within this complex interacts with EMSY. Found in a complex with RBBP5, ASH2L, DPY30, KMT2A, KMT2D and WDR5. Interacts with SETD1A. Interacts with WDR82. As to expression, ubiquitously expressed.

It is found in the nucleus. Its function is as follows. In embryonic stem (ES) cells, plays a crucial role in the differentiation potential, particularly along the neural lineage, regulating gene induction and H3 'Lys-4' methylation at key developmental loci, including that mediated by retinoic acid. Does not affect ES cell self-renewal. Component or associated component of some histone methyltransferase complexes which regulates transcription through recruitment of those complexes to gene promoters. As part of the MLL1/MLL complex, involved in mono-, di- and trimethylation at 'Lys-4' of histone H3. Histone H3 'Lys-4' methylation represents a specific tag for epigenetic transcriptional activation. In association with ASH2L and WDR5, stimulates the histone methyltransferase activities of KMT2A, KMT2B, KMT2C, KMT2D, SETD1A and SETD1B. This is Retinoblastoma-binding protein 5 (RBBP5) from Homo sapiens (Human).